Here is a 371-residue protein sequence, read N- to C-terminus: Regulatory protein RapK (371 aa).

TPR repeat units follow at residues 7-42 (EVVATTLNDWYIAIKKQKVDESIKYYSEIKKLFDEM), 93-130 (EYNFYLFEAMYEAYNKNYDRAINLYGLAEKKLAEIPDE), 175-208 (ATSTMIAAANYADMKRFEEAEQYYLEAIDIAKET), 215-248 (AQLFHNLSIVYSDWNKPDKCIESLEKAIGNESWL), 254-290 (INSLFMMIKELFKIDEKMKAINFYNKAQERLILMENK), and 331-364 (DELSYIAAKRFESIGAFEEATSFFNAKIWAEQKM).

This sequence belongs to the Rap family.

The protein localises to the cytoplasm. Its activity is regulated as follows. Inhibited by PhrK, which prevents RapK-ComA interaction. Functionally, involved in the regulation of genetic competence development. Inhibits the activity of ComA, a transcriptional factor that regulates the development of genetic competence. Likely affects the activity of additional regulators, in particular Spo0A. The chain is Regulatory protein RapK (rapK) from Bacillus subtilis (strain 168).